The following is a 337-amino-acid chain: ATP-dependent 6-phosphofructokinase (337 aa).

Glycine 11 contacts ATP. Residue 21 to 25 (RAVVR) coordinates ADP. ATP-binding positions include 72–73 (RY) and 102–105 (GDGS). Aspartate 103 contributes to the Mg(2+) binding site. 125 to 127 (TID) is a substrate binding site. Catalysis depends on aspartate 127, which acts as the Proton acceptor. Arginine 154 is a binding site for ADP. Substrate-binding positions include arginine 162 and 169–171 (MGR). ADP is bound by residues 185 to 187 (GAD), lysine 212, and 214 to 216 (KNH). Substrate contacts are provided by residues glutamate 223, arginine 245, and 251 to 254 (HILR).

It belongs to the phosphofructokinase type A (PFKA) family. ATP-dependent PFK group I subfamily. Prokaryotic clade 'B1' sub-subfamily. Homotetramer. Mg(2+) serves as cofactor.

The protein resides in the cytoplasm. It carries out the reaction beta-D-fructose 6-phosphate + ATP = beta-D-fructose 1,6-bisphosphate + ADP + H(+). It participates in carbohydrate degradation; glycolysis; D-glyceraldehyde 3-phosphate and glycerone phosphate from D-glucose: step 3/4. Its activity is regulated as follows. Allosterically activated by ADP and other diphosphonucleosides, and allosterically inhibited by phosphoenolpyruvate. Its function is as follows. Catalyzes the phosphorylation of D-fructose 6-phosphate to fructose 1,6-bisphosphate by ATP, the first committing step of glycolysis. This chain is ATP-dependent 6-phosphofructokinase, found in Streptococcus pyogenes serotype M4 (strain MGAS10750).